We begin with the raw amino-acid sequence, 289 residues long: 5'-3' exonuclease (289 aa).

The region spanning 166-256 (VEPQKIPDYL…EEDLKIKRPD (91 aa)) is the 5'-3' exonuclease domain.

Its function is as follows. 5'-3' exonuclease acting preferentially on double-stranded DNA. In Aquifex aeolicus (strain VF5), this protein is 5'-3' exonuclease.